Consider the following 98-residue polypeptide: Thrombin-like enzyme cerastotin (98 aa).

The 98-residue stretch at Val-1–His-98 folds into the Peptidase S1 domain. Active-site charge relay system residues include His-41 and Asp-85. Asn-94 is a glycosylation site (N-linked (GlcNAc...) asparagine).

It belongs to the peptidase S1 family. Snake venom subfamily. In terms of assembly, monomer. Expressed by the venom gland.

Its subcellular location is the secreted. Its activity is regulated as follows. Inhibited by PMSF. In terms of biological role, thrombin-like snake venom serine protease that preferentially cleaves the alpha-chain of fibrinogen (FGA). Induce platelet aggregation in the presence of exogenous fibrinogen. Possesses esterase and amidolytic activities. The sequence is that of Thrombin-like enzyme cerastotin from Cerastes cerastes (Horned desert viper).